Here is a 550-residue protein sequence, read N- to C-terminus: Calcium-dependent protein kinase 20 (550 aa).

Residues 1 to 58 form a disordered region; the sequence is MGNCCVTPEGSGRGRKKQQQEQKQKQKEPKQQQQQQKKGKKPNPFSIEYNRSSAPSGH. G2 carries N-myristoyl glycine lipidation. The span at 18-30 shows a compositional bias: basic and acidic residues; that stretch reads QQQEQKQKQKEPK. The region spanning 75 to 333 is the Protein kinase domain; it reads YELGGELGRG…AQQVLDHPWL (259 aa). Residues 81-89 and K104 each bind ATP; that span reads LGRGEFGVT. D199 serves as the catalytic Proton acceptor. Residues 339–369 are autoinhibitory domain; sequence APNVNLGETVKARLQQFSVMNKFKKHALRVI. 4 EF-hand domains span residues 376 to 411, 412 to 447, 448 to 483, and 484 to 519; these read EEVAGIKDMFEKMDLNKDNMINFDELKLGLHKLGHQ, MADADVQILMDAADVDGNGSLDYGEFVALSVHLRKI, GNDEHLHKAFAYFDRNQSGYIEIDELRESLADDLGA, and NHEEVINAIIRDVDTDKDGKISYDEFAAMMKAGTDW. Residues D389, N391, D393, M395, E400, D425, D427, N429, S431, E436, D461, N463, S465, Y467, E472, D497, D499, D501, K503, and E508 each contribute to the Ca(2+) site.

This sequence belongs to the protein kinase superfamily. Ser/Thr protein kinase family. CDPK subfamily. Expressed in roots and leaf blades.

The protein resides in the membrane. It carries out the reaction L-seryl-[protein] + ATP = O-phospho-L-seryl-[protein] + ADP + H(+). The catalysed reaction is L-threonyl-[protein] + ATP = O-phospho-L-threonyl-[protein] + ADP + H(+). Its activity is regulated as follows. Activated by calcium. Autophosphorylation may play an important role in the regulation of the kinase activity. Its function is as follows. May play a role in signal transduction pathways that involve calcium as a second messenger. The polypeptide is Calcium-dependent protein kinase 20 (Oryza sativa subsp. japonica (Rice)).